Here is a 414-residue protein sequence, read N- to C-terminus: Esterase FrsA (414 aa).

The protein belongs to the FrsA family.

It carries out the reaction a carboxylic ester + H2O = an alcohol + a carboxylate + H(+). Catalyzes the hydrolysis of esters. In Escherichia coli O7:K1 (strain IAI39 / ExPEC), this protein is Esterase FrsA.